The chain runs to 179 residues: Large ribosomal subunit protein uL6 (179 aa).

This sequence belongs to the universal ribosomal protein uL6 family. Part of the 50S ribosomal subunit.

In terms of biological role, this protein binds to the 23S rRNA, and is important in its secondary structure. It is located near the subunit interface in the base of the L7/L12 stalk, and near the tRNA binding site of the peptidyltransferase center. This Geotalea uraniireducens (strain Rf4) (Geobacter uraniireducens) protein is Large ribosomal subunit protein uL6.